The primary structure comprises 166 residues: Urease accessory protein UreE (166 aa).

This sequence belongs to the UreE family.

It localises to the cytoplasm. Involved in urease metallocenter assembly. Binds nickel. Probably functions as a nickel donor during metallocenter assembly. The sequence is that of Urease accessory protein UreE from Pseudomonas fluorescens (strain Pf0-1).